The chain runs to 362 residues: ATPase ARSA2 (362 aa).

Residue 27 to 34 (KGGVGKTT) coordinates ATP. Asp58 is a catalytic residue. ATP is bound by residues Glu235 and Asn262.

This sequence belongs to the arsA ATPase family. In terms of assembly, homodimer. Interacts with SEC61B.

The protein localises to the cytoplasm. Its subcellular location is the cytosol. It is found in the endoplasmic reticulum. ATPase required for the post-translational delivery of tail-anchored (TA) proteins to the endoplasmic reticulum. Recognizes and selectively binds the transmembrane domain of TA proteins in the cytosol. This complex then targets to the endoplasmic reticulum by membrane-bound receptors, where the tail-anchored protein is released for insertion. This process is regulated by ATP binding and hydrolysis. ATP binding drives the homodimer towards the closed dimer state, facilitating recognition of newly synthesized TA membrane proteins. ATP hydrolysis is required for insertion. Subsequently, the homodimer reverts towards the open dimer state, lowering its affinity for the membrane-bound receptor, and returning it to the cytosol to initiate a new round of targeting. The protein is ATPase ARSA2 of Chlamydomonas reinhardtii (Chlamydomonas smithii).